The sequence spans 147 residues: HTH-type transcriptional regulator MntR (147 aa).

The HTH dtxR-type domain occupies 1–63 (MPTPSMEDYI…YEKYRGFVLT (63 aa)). Positions 8, 11, 77, 99, 102, and 103 each coordinate Mn(2+).

This sequence belongs to the DtxR/MntR family. In terms of assembly, homodimer.

Its subcellular location is the cytoplasm. DNA binding is strongly activated by Mn(2+). In terms of biological role, central regulator of manganese homeostasis. This chain is HTH-type transcriptional regulator MntR, found in Oceanobacillus iheyensis (strain DSM 14371 / CIP 107618 / JCM 11309 / KCTC 3954 / HTE831).